A 263-amino-acid chain; its full sequence is Regulatory protein RecX (263 aa).

This sequence belongs to the RecX family.

Its subcellular location is the cytoplasm. Its function is as follows. Modulates RecA activity. The sequence is that of Regulatory protein RecX from Bacillus licheniformis (strain ATCC 14580 / DSM 13 / JCM 2505 / CCUG 7422 / NBRC 12200 / NCIMB 9375 / NCTC 10341 / NRRL NRS-1264 / Gibson 46).